The primary structure comprises 334 residues: Geminin coiled-coil domain-containing protein 1 (334 aa).

Residues 82–119 are a coiled coil; it reads SQLYRNKQLQDTLVQKEEELARLHEENNHLRQYLNSAL. The tract at residues 143 to 167 is disordered; it reads FRKGKRKSKEQRYSPAEIPHPKNAK.

Belongs to the GEMC1 family. Highly phosphorylated by CDK2; stimulates initiation of DNA replication.

The protein resides in the nucleus. Functionally, regulator of DNA replication. Promotes initiation of chromosomal DNA replication by mediating TOPBP1- and CDK2-dependent recruitment of CDC45L onto replication origins. In Homo sapiens (Human), this protein is Geminin coiled-coil domain-containing protein 1 (GMNC).